A 252-amino-acid chain; its full sequence is Small ribosomal subunit protein uS3 (252 aa).

In terms of domain architecture, KH type-2 spans 39 to 109; that stretch reads IRNYVQTRLK…EVKIDVVEVV (71 aa). Positions 221–241 are enriched in basic and acidic residues; the sequence is EMKRIKERRSDSGPRSRNDRS. A disordered region spans residues 221–252; the sequence is EMKRIKERRSDSGPRSRNDRSQKRRRRPNDRG. Basic residues predominate over residues 242 to 252; it reads QKRRRRPNDRG.

Belongs to the universal ribosomal protein uS3 family. As to quaternary structure, part of the 30S ribosomal subunit. Forms a tight complex with proteins S10 and S14.

Binds the lower part of the 30S subunit head. Binds mRNA in the 70S ribosome, positioning it for translation. This Chlorobium luteolum (strain DSM 273 / BCRC 81028 / 2530) (Pelodictyon luteolum) protein is Small ribosomal subunit protein uS3.